A 562-amino-acid polypeptide reads, in one-letter code: Long-chain-fatty-acid--CoA ligase (562 aa).

Belongs to the ATP-dependent AMP-binding enzyme family. Requires Mg(2+) as cofactor.

It localises to the membrane. The enzyme catalyses a long-chain fatty acid + ATP + CoA = a long-chain fatty acyl-CoA + AMP + diphosphate. It functions in the pathway lipid metabolism; fatty acid beta-oxidation. Its function is as follows. Catalyzes the esterification, concomitant with transport, of exogenous long-chain fatty acids into metabolically active CoA thioesters for subsequent degradation or incorporation into phospholipids. This chain is Long-chain-fatty-acid--CoA ligase (fadD), found in Haemophilus influenzae (strain ATCC 51907 / DSM 11121 / KW20 / Rd).